The primary structure comprises 95 residues: Large ribosomal subunit protein bL28 (95 aa).

The tract at residues 1-28 is disordered; the sequence is MARKRTLGGKAPQAGNKVSHSQRKTRRQ.

It belongs to the bacterial ribosomal protein bL28 family.

The sequence is that of Large ribosomal subunit protein bL28 from Magnetococcus marinus (strain ATCC BAA-1437 / JCM 17883 / MC-1).